The following is a 396-amino-acid chain: Aspartate aminotransferase (396 aa).

Residues G34, W130, and N183 each contribute to the L-aspartate site. K246 carries the post-translational modification N6-(pyridoxal phosphate)lysine. R374 is an L-aspartate binding site.

Belongs to the class-I pyridoxal-phosphate-dependent aminotransferase family. In terms of assembly, homodimer. The cofactor is pyridoxal 5'-phosphate.

The protein localises to the cytoplasm. The enzyme catalyses L-aspartate + 2-oxoglutarate = oxaloacetate + L-glutamate. In Salmonella typhi, this protein is Aspartate aminotransferase (aspC).